We begin with the raw amino-acid sequence, 182 residues long: MIKLTQEEQKYLLDSIRIIPDFPKKGIIFRDITTLLNNKEALNFLLKHLKERYKDYNLDFIAGTESRGFIFASMICAKLNLPFVPIRKPGKLPFETFSCEYDLEYGSDKVELHKDAFKNIQNARVLLVDDLIATGGTAIASYELIQKAGAKCVEACFLINLKDLNGANKLEKLTSVYSVLEI.

It belongs to the purine/pyrimidine phosphoribosyltransferase family. Homodimer.

The protein localises to the cytoplasm. It carries out the reaction AMP + diphosphate = 5-phospho-alpha-D-ribose 1-diphosphate + adenine. It participates in purine metabolism; AMP biosynthesis via salvage pathway; AMP from adenine: step 1/1. In terms of biological role, catalyzes a salvage reaction resulting in the formation of AMP, that is energically less costly than de novo synthesis. The protein is Adenine phosphoribosyltransferase of Campylobacter jejuni subsp. jejuni serotype O:2 (strain ATCC 700819 / NCTC 11168).